Consider the following 752-residue polypeptide: Pentatricopeptide repeat-containing protein At5g13270, chloroplastic (752 aa).

Residues 1–80 (MTILTVQSSF…LQEMDKAGVS (80 aa)) constitute a chloroplast transit peptide. 15 PPR repeats span residues 47–81 (QGQVENLHLVSLSKHRKLNEAFEFLQEMDKAGVSV), 82–116 (SSYSYQCLFEACRELRSLSHGRLLHDRMRMGIENP), 117–147 (SVLLQNCVLQMYCECRSLEDADKLFDEMSEL), 148–182 (NAVSRTTMISAYAEQGILDKAVGLFSGMLASGDKP), 183–217 (PSSMYTTLLKSLVNPRALDFGRQIHAHVIRAGLCS), 218–248 (NTSIETGIVNMYVKCGWLVGAKRVFDQMAVK), 249–283 (KPVACTGLMVGYTQAGRARDALKLFVDLVTEGVEW), 284–318 (DSFVFSVVLKACASLEELNLGKQIHACVAKLGLES), 319–349 (EVSVGTPLVDFYIKCSSFESACRAFQEIREP), 350–384 (NDVSWSAIISGYCQMSQFEEAVKTFKSLRSKNASI), 386–420 (NSFTYTSIFQACSVLADCNIGGQVHADAIKRSLIG), 421–451 (SQYGESALITMYSKCGCLDDANEVFESMDNP), 452–486 (DIVAWTAFISGHAYYGNASEALRLFEKMVSCGMKP), 487–522 (NSVTFIAVLTACSHAGLVEQGKHCLDTMLRKYNVAP), and 523–553 (TIDHYDCMIDIYARSGLLDEALKFMKNMPFE). Residues 558 to 633 (SWKCFLSGCW…ELSCSWIQEK (76 aa)) are type E motif. The interval 634–664 (GKIHRFIVGDKHHPQTQEIYEKLKEFDGFME) is type E(+) motif. Positions 665–752 (GDMFQCNMTE…EGKCSCNDYW (88 aa)) are type DYW motif.

Belongs to the PPR family. PCMP-H subfamily.

The protein localises to the plastid. It localises to the chloroplast. This Arabidopsis thaliana (Mouse-ear cress) protein is Pentatricopeptide repeat-containing protein At5g13270, chloroplastic (PCMP-H90).